We begin with the raw amino-acid sequence, 257 residues long: Low affinity immunoglobulin gamma Fc region receptor III-A (257 aa).

A signal peptide spans 1 to 19; that stretch reads MWQLLSPTALLLLVSVPGT. The Extracellular segment spans residues 20 to 209; that stretch reads HAEDPPKSVV…ILSFFLPWHQ (190 aa). Ig-like C2-type domains are found at residues 25-104 and 108-190; these read PKSV…LRLE and GWLL…VKVT. Intrachain disulfides connect cysteine 48–cysteine 90 and cysteine 129–cysteine 173. Asparagine 64, asparagine 134, and asparagine 162 each carry an N-linked (GlcNAc...) asparagine glycan. Aspartate 181 carries an N-linked (GlcNAc...) asparagine; in variant N-181 glycan. The chain crosses the membrane as a helical span at residues 210 to 230; the sequence is IIFCLVMGFLFAVDTGLYFSV. At 231 to 257 the chain is on the cytoplasmic side; that stretch reads RKVLRSSKEDWRNGKVTWSRDPADKGG.

As to quaternary structure, forms a heterooligomeric complex with ITAM-containing signaling subunits FCER1G. Interacts (via transmembrane domain) with signaling subunits; this interaction is a prerequisite for receptor complex expression on the cell surface and intracellular signal transduction. Binds the Fc region of antigen-complexed IgG. In terms of tissue distribution, expressed in polymorphonuclear leukocytes, pulmonary alveolar macrophages and peripheral blood mononuclear cells (at protein level). Found in spleen, and at very low levels in lymph nodes but not in thymus or liver.

It localises to the cell membrane. In terms of biological role, receptor for the invariable Fc fragment of immunoglobulin gamma (IgG). Optimally activated upon binding of clustered antigen-IgG complexes displayed on cell surfaces, triggers lysis of antibody-coated cells, a process known as antibody-dependent cellular cytotoxicity (ADCC). Does not bind free monomeric IgG, thus avoiding inappropriate effector cell activation in the absence of antigenic trigger. Mediates IgG effector functions on natural killer (NK) cells. Binds antigen-IgG complexes generated upon infection and triggers NK cell-dependent cytokine production and degranulation to limit viral load and propagation. Fc-binding subunit that associates with FCER1G adapter to form functional signaling complexes. Following the engagement of antigen-IgG complexes, triggers phosphorylation of immunoreceptor tyrosine-based activation motif (ITAM)-containing adapter with subsequent activation of phosphatidylinositol 3-kinase signaling and sustained elevation of intracellular calcium that ultimately drive NK cell activation. Mediates enhanced ADCC in response to afucosylated IgGs. The protein is Low affinity immunoglobulin gamma Fc region receptor III-A of Sus scrofa (Pig).